We begin with the raw amino-acid sequence, 359 residues long: Protein RecA (359 aa).

Position 77 to 84 (77 to 84 (GPESSGKT)) interacts with ATP.

It belongs to the RecA family.

It localises to the cytoplasm. Can catalyze the hydrolysis of ATP in the presence of single-stranded DNA, the ATP-dependent uptake of single-stranded DNA by duplex DNA, and the ATP-dependent hybridization of homologous single-stranded DNAs. It interacts with LexA causing its activation and leading to its autocatalytic cleavage. In Paramagnetospirillum magneticum (strain ATCC 700264 / AMB-1) (Magnetospirillum magneticum), this protein is Protein RecA.